We begin with the raw amino-acid sequence, 446 residues long: ATP synthase subunit b-delta (446 aa).

The tract at residues methionine 1 to leucine 168 is ATP synthase subunit b. A helical transmembrane segment spans residues phenylalanine 4–proline 24. Positions methionine 169–aspartate 446 are ATP synthase subunit delta.

This sequence in the N-terminal section; belongs to the ATPase B chain family. It in the C-terminal section; belongs to the ATPase delta chain family. In terms of assembly, F-type ATPases have 2 components, F(1) - the catalytic core - and F(0) - the membrane proton channel. F(1) has five subunits: alpha(3), beta(3), gamma(1), delta(1), epsilon(1). F(0) has three main subunits: a(1), b(2) and c(10-14). The alpha and beta chains form an alternating ring which encloses part of the gamma chain. F(1) is attached to F(0) by a central stalk formed by the gamma and epsilon chains, while a peripheral stalk is formed by the delta and b chains.

The protein localises to the cell membrane. In terms of biological role, f(1)F(0) ATP synthase produces ATP from ADP in the presence of a proton or sodium gradient. F-type ATPases consist of two structural domains, F(1) containing the extramembraneous catalytic core and F(0) containing the membrane proton channel, linked together by a central stalk and a peripheral stalk. During catalysis, ATP synthesis in the catalytic domain of F(1) is coupled via a rotary mechanism of the central stalk subunits to proton translocation. Functionally, this fusion protein includes a component of the F(0) channel (subunit b) and of the F(1) subunit (subunit delta). Two copies of subunit b and one of delta together form the peripheral 'stator' stalk which links F(1) to F(0). This chain is ATP synthase subunit b-delta (atpFH), found in Mycobacterium avium (strain 104).